We begin with the raw amino-acid sequence, 64 residues long: MTTSTNRITIEQVKSPIGRPGSQKATLIGLGLNKIGRRSSLEDSPAVRGMIAKVAHLIRVIDGQ.

Belongs to the universal ribosomal protein uL30 family. As to quaternary structure, part of the 50S ribosomal subunit.

The chain is Large ribosomal subunit protein uL30 from Beijerinckia indica subsp. indica (strain ATCC 9039 / DSM 1715 / NCIMB 8712).